The following is a 187-amino-acid chain: Protein GrpE (187 aa).

A disordered region spans residues 1–38 (MSEEKQTVEQNETEEQEIIEEQAAADEQQEETNESELL). A compositionally biased stretch (acidic residues) spans 11–34 (NETEEQEIIEEQAAADEQQEETNE).

This sequence belongs to the GrpE family. As to quaternary structure, homodimer.

Its subcellular location is the cytoplasm. Its function is as follows. Participates actively in the response to hyperosmotic and heat shock by preventing the aggregation of stress-denatured proteins, in association with DnaK and GrpE. It is the nucleotide exchange factor for DnaK and may function as a thermosensor. Unfolded proteins bind initially to DnaJ; upon interaction with the DnaJ-bound protein, DnaK hydrolyzes its bound ATP, resulting in the formation of a stable complex. GrpE releases ADP from DnaK; ATP binding to DnaK triggers the release of the substrate protein, thus completing the reaction cycle. Several rounds of ATP-dependent interactions between DnaJ, DnaK and GrpE are required for fully efficient folding. The polypeptide is Protein GrpE (Bacillus subtilis (strain 168)).